The chain runs to 729 residues: Phosphoribosylformylglycinamidine synthase subunit PurL (729 aa).

His42 is an active-site residue. ATP-binding residues include Tyr45 and Lys84. Glu86 is a binding site for Mg(2+). Substrate is bound by residues 87 to 90 (SHNH) and Arg109. His88 acts as the Proton acceptor in catalysis. Asp110 contributes to the Mg(2+) binding site. Position 238 (Gln238) interacts with substrate. Asp266 serves as a coordination point for Mg(2+). 310-312 (ESQ) contributes to the substrate binding site. 2 residues coordinate ATP: Asp492 and Gly529. Asn530 serves as a coordination point for Mg(2+). Substrate is bound at residue Ser532.

The protein belongs to the FGAMS family. In terms of assembly, monomer. Part of the FGAM synthase complex composed of 1 PurL, 1 PurQ and 2 PurS subunits.

The protein localises to the cytoplasm. It carries out the reaction N(2)-formyl-N(1)-(5-phospho-beta-D-ribosyl)glycinamide + L-glutamine + ATP + H2O = 2-formamido-N(1)-(5-O-phospho-beta-D-ribosyl)acetamidine + L-glutamate + ADP + phosphate + H(+). The protein operates within purine metabolism; IMP biosynthesis via de novo pathway; 5-amino-1-(5-phospho-D-ribosyl)imidazole from N(2)-formyl-N(1)-(5-phospho-D-ribosyl)glycinamide: step 1/2. Part of the phosphoribosylformylglycinamidine synthase complex involved in the purines biosynthetic pathway. Catalyzes the ATP-dependent conversion of formylglycinamide ribonucleotide (FGAR) and glutamine to yield formylglycinamidine ribonucleotide (FGAM) and glutamate. The FGAM synthase complex is composed of three subunits. PurQ produces an ammonia molecule by converting glutamine to glutamate. PurL transfers the ammonia molecule to FGAR to form FGAM in an ATP-dependent manner. PurS interacts with PurQ and PurL and is thought to assist in the transfer of the ammonia molecule from PurQ to PurL. The chain is Phosphoribosylformylglycinamidine synthase subunit PurL from Campylobacter curvus (strain 525.92).